A 349-amino-acid polypeptide reads, in one-letter code: Beta-hexosaminidase (349 aa).

Substrate-binding positions include Asp64, Arg72, Arg138, and 168-169 (KH). His181 (proton donor/acceptor) is an active-site residue. The active-site Nucleophile is Asp252.

The protein belongs to the glycosyl hydrolase 3 family. NagZ subfamily.

The protein resides in the cytoplasm. The enzyme catalyses Hydrolysis of terminal non-reducing N-acetyl-D-hexosamine residues in N-acetyl-beta-D-hexosaminides.. The protein operates within cell wall biogenesis; peptidoglycan recycling. Functionally, plays a role in peptidoglycan recycling by cleaving the terminal beta-1,4-linked N-acetylglucosamine (GlcNAc) from peptide-linked peptidoglycan fragments, giving rise to free GlcNAc, anhydro-N-acetylmuramic acid and anhydro-N-acetylmuramic acid-linked peptides. The protein is Beta-hexosaminidase of Methylobacillus flagellatus (strain ATCC 51484 / DSM 6875 / VKM B-1610 / KT).